The following is a 511-amino-acid chain: uncharacterized protein (511 aa).

Helical transmembrane passes span 33–53 (IICMIIAYVFILPAGIVLAMA), 59–79 (IPVQIVYVILTLIGYIFAHIS), and 97–117 (VGRFFMWITFLIAIVGITTSI). Residues serine 147, serine 161, and serine 162 each carry the phosphoserine modification. A disordered region spans residues 157-180 (REGNSSDEYLPPQSSRRDVSSEKP). A run of 7 helical transmembrane segments spans residues 216–236 (LWLYVGFFESCTGIVLLAGIF), 249–269 (IKGAIFLWYGILSFGEYLGAF), 297–317 (MVESFLLFAYGVSNVWLEHLG), 332–352 (SLAFMLWWAGLCGILVESKVV), 412–432 (VLWGRLLAAAAIARICTYIML), 449–469 (IITSFCLICGGAMFMASSYDV), and 483–503 (IMNISVAFTCIVMGLEVMFLI).

The protein to yeast YCR061W.

It localises to the endoplasmic reticulum membrane. This is an uncharacterized protein from Schizosaccharomyces pombe (strain 972 / ATCC 24843) (Fission yeast).